The chain runs to 156 residues: Ribosomal RNA large subunit methyltransferase H (156 aa).

Residues Leu73, Gly104, and Leu123–Leu128 contribute to the S-adenosyl-L-methionine site.

The protein belongs to the RNA methyltransferase RlmH family. As to quaternary structure, homodimer.

The protein localises to the cytoplasm. It catalyses the reaction pseudouridine(1915) in 23S rRNA + S-adenosyl-L-methionine = N(3)-methylpseudouridine(1915) in 23S rRNA + S-adenosyl-L-homocysteine + H(+). In terms of biological role, specifically methylates the pseudouridine at position 1915 (m3Psi1915) in 23S rRNA. The protein is Ribosomal RNA large subunit methyltransferase H of Shewanella pealeana (strain ATCC 700345 / ANG-SQ1).